Consider the following 95-residue polypeptide: Feather keratin B-4 (95 aa).

At S1 the chain carries N-acetylserine.

Belongs to the avian keratin family. As to quaternary structure, the avian keratins (F-ker, S-ker, C-ker and B-ker) are a complex mixture of very similar polypeptides.

This chain is Feather keratin B-4, found in Columba livia (Rock dove).